Consider the following 351-residue polypeptide: Glycerol-1-phosphate dehydrogenase [NAD(P)+] (351 aa).

NAD(+) contacts are provided by residues 97-101 (GTVID) and 119-122 (TSPS). Position 124 (Asp124) interacts with substrate. Ser128 is a binding site for NAD(+). Asp171 is a binding site for substrate. 2 residues coordinate Zn(2+): Asp171 and His251. His255 provides a ligand contact to substrate. His267 is a Zn(2+) binding site.

This sequence belongs to the glycerol-1-phosphate dehydrogenase family. In terms of assembly, homodimer. Requires Zn(2+) as cofactor.

Its subcellular location is the cytoplasm. The catalysed reaction is sn-glycerol 1-phosphate + NAD(+) = dihydroxyacetone phosphate + NADH + H(+). It carries out the reaction sn-glycerol 1-phosphate + NADP(+) = dihydroxyacetone phosphate + NADPH + H(+). Its pathway is membrane lipid metabolism; glycerophospholipid metabolism. Functionally, catalyzes the NAD(P)H-dependent reduction of dihydroxyacetonephosphate (DHAP or glycerone phosphate) to glycerol 1-phosphate (G1P). The G1P thus generated is used as the glycerophosphate backbone of phospholipids in the cellular membranes of Archaea. The polypeptide is Glycerol-1-phosphate dehydrogenase [NAD(P)+] (Sulfolobus acidocaldarius (strain ATCC 33909 / DSM 639 / JCM 8929 / NBRC 15157 / NCIMB 11770)).